Here is a 100-residue protein sequence, read N- to C-terminus: Aspartyl/glutamyl-tRNA(Asn/Gln) amidotransferase subunit C (100 aa).

Belongs to the GatC family. As to quaternary structure, heterotrimer of A, B and C subunits.

The catalysed reaction is L-glutamyl-tRNA(Gln) + L-glutamine + ATP + H2O = L-glutaminyl-tRNA(Gln) + L-glutamate + ADP + phosphate + H(+). The enzyme catalyses L-aspartyl-tRNA(Asn) + L-glutamine + ATP + H2O = L-asparaginyl-tRNA(Asn) + L-glutamate + ADP + phosphate + 2 H(+). Allows the formation of correctly charged Asn-tRNA(Asn) or Gln-tRNA(Gln) through the transamidation of misacylated Asp-tRNA(Asn) or Glu-tRNA(Gln) in organisms which lack either or both of asparaginyl-tRNA or glutaminyl-tRNA synthetases. The reaction takes place in the presence of glutamine and ATP through an activated phospho-Asp-tRNA(Asn) or phospho-Glu-tRNA(Gln). The polypeptide is Aspartyl/glutamyl-tRNA(Asn/Gln) amidotransferase subunit C (Rickettsia canadensis (strain McKiel)).